The following is a 340-amino-acid chain: Putative cystathionine beta-lyase (340 aa).

The residue at position 208 (Lys-208) is an N6-(pyridoxal phosphate)lysine.

This sequence belongs to the trans-sulfuration enzymes family. Requires pyridoxal 5'-phosphate as cofactor.

It catalyses the reaction L,L-cystathionine + H2O = L-homocysteine + pyruvate + NH4(+). It carries out the reaction an S-substituted L-cysteine + H2O = a thiol + pyruvate + NH4(+). Its pathway is amino-acid biosynthesis; L-methionine biosynthesis via de novo pathway; L-homocysteine from L-cystathionine: step 1/1. The protein is Putative cystathionine beta-lyase (IRC7) of Saccharomyces cerevisiae (strain ATCC 204508 / S288c) (Baker's yeast).